The following is a 441-amino-acid chain: uncharacterized protein (441 aa).

Transmembrane regions (helical) follow at residues 62 to 82 (FLSLGFFLVIIVLVGIAFEIG), 88 to 108 (LILTLALEVYFFSTALLKLFG), 112 to 132 (IALTLHFFEPLLVFILLIIAL), 154 to 174 (ALLHFTPLFNLLEGMASLLVV), 192 to 212 (WMFFILLNASSAISMSLYLLY), 224 to 244 (ALMIGFSLATVIVISIYGVAS), 247 to 267 (ANLSEASLMFLYIAYTVYMVC), 312 to 332 (IVLFMVAAAKTVAPSVFATFA), 335 to 355 (ISVMYAVTRILPAIQNNIIFL), 363 to 383 (QGMWSILSPCILIAVYTNLLL), and 399 to 419 (ILCSAEIWRWVSAILTLLLYA).

The protein resides in the membrane. This is an uncharacterized protein from Schizosaccharomyces pombe (strain 972 / ATCC 24843) (Fission yeast).